A 191-amino-acid polypeptide reads, in one-letter code: dITP/XTP pyrophosphatase (191 aa).

Serine 8–lysine 13 is a substrate binding site. Mg(2+) is bound by residues glutamate 38 and aspartate 67. Aspartate 67 (proton acceptor) is an active-site residue. Residues serine 68, phenylalanine 146 to aspartate 149, lysine 169, and histidine 174 to arginine 175 contribute to the substrate site.

The protein belongs to the HAM1 NTPase family. As to quaternary structure, homodimer. Mg(2+) is required as a cofactor.

The enzyme catalyses XTP + H2O = XMP + diphosphate + H(+). It catalyses the reaction dITP + H2O = dIMP + diphosphate + H(+). The catalysed reaction is ITP + H2O = IMP + diphosphate + H(+). Functionally, pyrophosphatase that catalyzes the hydrolysis of nucleoside triphosphates to their monophosphate derivatives, with a high preference for the non-canonical purine nucleotides XTP (xanthosine triphosphate), dITP (deoxyinosine triphosphate) and ITP. Seems to function as a house-cleaning enzyme that removes non-canonical purine nucleotides from the nucleotide pool, thus preventing their incorporation into DNA/RNA and avoiding chromosomal lesions. The protein is dITP/XTP pyrophosphatase of Prochlorococcus marinus subsp. pastoris (strain CCMP1986 / NIES-2087 / MED4).